Here is a 513-residue protein sequence, read N- to C-terminus: Pleiotropic regulator 1 (513 aa).

The residue at position 1 (methionine 1) is an N-acetylmethionine. Phosphoserine is present on residues serine 119 and serine 200. 7 WD repeats span residues 201 to 240 (GHLG…LKLS), 243 to 282 (GHIS…VIRH), 285 to 324 (GHLS…SVHT), 327 to 366 (GHTN…TRVT), 369 to 409 (NHKK…QNLS), 410 to 448 (GHNA…NFQR), and 459 to 498 (DSES…TEET). Serine 390 bears the Phosphoserine mark.

This sequence belongs to the WD repeat PRL1/PRL2 family. In terms of assembly, identified in the spliceosome C complex. Component of the PRP19-CDC5L splicing complex composed of a core complex comprising a homotetramer of PRPF19, CDC5L, PLRG1 and BCAS2, and at least three less stably associated proteins CTNNBL1, CWC15 and HSPA8. Interacts (via its WD40 repeat domain) directly with CDC5L (via its C-terminal); the interaction is required for mRNA splicing but not for spliceosome assembly. Component of the minor spliceosome, which splices U12-type introns. Within this complex, interacts with CRIPT. Also interacts directly in the complex with BCAS2 and PRPF19. Interacts with USB1.

It is found in the nucleus. The protein resides in the nucleus speckle. Involved in pre-mRNA splicing as component of the spliceosome. Component of the PRP19-CDC5L complex that forms an integral part of the spliceosome and is required for activating pre-mRNA splicing. As a component of the minor spliceosome, involved in the splicing of U12-type introns in pre-mRNAs. This Bos taurus (Bovine) protein is Pleiotropic regulator 1 (PLRG1).